Here is an 880-residue protein sequence, read N- to C-terminus: DNA double-strand break repair Rad50 ATPase (880 aa).

Residues arginine 12, 32–38 (NGSGKSS), and glutamine 138 contribute to the ATP site. Coiled coils occupy residues 225–336 (GELE…VIKE) and 391–744 (GEVI…QALN). The region spanning 397-494 (LESLEKERTE…NLRKLEIKLR (98 aa)) is the Zinc-hook domain. Positions 442 and 445 each coordinate Zn(2+). 789–794 (FLSGGE) contributes to the ATP binding site.

Belongs to the SMC family. RAD50 subfamily. As to quaternary structure, homodimer. Forms a heterotetramer composed of two Mre11 subunits and two Rad50 subunits. The cofactor is Zn(2+).

In terms of biological role, part of the Rad50/Mre11 complex, which is involved in the early steps of DNA double-strand break (DSB) repair. The complex may facilitate opening of the processed DNA ends to aid in the recruitment of HerA and NurA. Rad50 controls the balance between DNA end bridging and DNA resection via ATP-dependent structural rearrangements of the Rad50/Mre11 complex. The polypeptide is DNA double-strand break repair Rad50 ATPase (Pyrococcus abyssi (strain GE5 / Orsay)).